The chain runs to 162 residues: MSRRVLLINGPNLNLLGKREPHIYGSTTLEDIETQARQQAHELGVEIDTFQSNHEGAIVDRIQETAGWGPNVRETDTPGKRVSAIIINAGALTHTSVAVRDALAAVAIPFVELHVSNVHARETFRAHSYLSDKAVAVICGMGAYGYSAAIEFAAKHLKIEGE.

Tyrosine 24 serves as the catalytic Proton acceptor. 3 residues coordinate substrate: asparagine 88, histidine 94, and aspartate 101. Histidine 114 (proton donor) is an active-site residue. Substrate contacts are provided by residues 115–116 (VS) and arginine 125.

The protein belongs to the type-II 3-dehydroquinase family. Homododecamer. Adopts a ring-like structure, composed of an arrangement of two hexameric rings stacked on top of one another.

The enzyme catalyses 3-dehydroquinate = 3-dehydroshikimate + H2O. Its pathway is aromatic compound metabolism; 3,4-dihydroxybenzoate biosynthesis; 3,4-dihydroxybenzoate from 3-dehydroquinate: step 1/2. In terms of biological role, is involved in the catabolism of quinate. Allows the utilization of quinate as carbon source via the beta-ketoadipate pathway. The sequence is that of Catabolic 3-dehydroquinase from Podospora anserina (strain S / ATCC MYA-4624 / DSM 980 / FGSC 10383) (Pleurage anserina).